The chain runs to 292 residues: NAD kinase (292 aa).

D73 serves as the catalytic Proton acceptor. Residues 73 to 74, 147 to 148, H158, R175, D177, 188 to 193, and Q247 contribute to the NAD(+) site; these read DG, NE, and TGYSLS.

It belongs to the NAD kinase family. Requires a divalent metal cation as cofactor.

It is found in the cytoplasm. The enzyme catalyses NAD(+) + ATP = ADP + NADP(+) + H(+). Involved in the regulation of the intracellular balance of NAD and NADP, and is a key enzyme in the biosynthesis of NADP. Catalyzes specifically the phosphorylation on 2'-hydroxyl of the adenosine moiety of NAD to yield NADP. This is NAD kinase from Buchnera aphidicola subsp. Acyrthosiphon pisum (strain 5A).